The primary structure comprises 57 residues: Small hydrophobic protein (57 aa).

The Virion surface segment spans residues 1-8; that stretch reads MPAIQPPL. Residues 9-29 form a helical membrane-spanning segment; that stretch reads YPTFLLLILLSLIITLYAWII. The Intravirion portion of the chain corresponds to 30–57; that stretch reads STITYKTAMRHAALYQRSFFRWSFDHSL.

The protein belongs to the rubulavirus small hydrophobic protein family. Interacts with host TNFRSF1A, RIPK1 and IRAK1; these interactions interfere with host NF-kappa-B activation at the level of receptor complexes. Interacts with host protein UBQLN4.

It localises to the virion membrane. It is found in the host cell membrane. Functionally, plays a role in the inhibition of the host NF-kappa-B pathway. This inhibition occurs at the receptor level, by preventing the signaling of TNFR1 as well as IL-1R and TLR3. This chain is Small hydrophobic protein (SH), found in Homo sapiens (Human).